A 296-amino-acid chain; its full sequence is Pantothenate synthetase (296 aa).

ATP is bound at residue 37 to 44 (MGALHTGH). The active-site Proton donor is His-44. Position 68 (Gln-68) interacts with (R)-pantoate. Beta-alanine is bound at residue Gln-68. 160 to 163 (GQKD) is a binding site for ATP. Gln-166 is a binding site for (R)-pantoate. ATP contacts are provided by residues Val-189 and 197 to 200 (TSSR).

The protein belongs to the pantothenate synthetase family. In terms of assembly, homodimer.

It is found in the cytoplasm. The catalysed reaction is (R)-pantoate + beta-alanine + ATP = (R)-pantothenate + AMP + diphosphate + H(+). It functions in the pathway cofactor biosynthesis; (R)-pantothenate biosynthesis; (R)-pantothenate from (R)-pantoate and beta-alanine: step 1/1. Functionally, catalyzes the condensation of pantoate with beta-alanine in an ATP-dependent reaction via a pantoyl-adenylate intermediate. The chain is Pantothenate synthetase from Thermobifida fusca (strain YX).